The chain runs to 170 residues: Ureidoglycolate lyase (170 aa).

The protein belongs to the ureidoglycolate lyase family. Homodimer. The cofactor is Ni(2+).

The enzyme catalyses (S)-ureidoglycolate = urea + glyoxylate. It functions in the pathway nitrogen metabolism; (S)-allantoin degradation. Catalyzes the catabolism of the allantoin degradation intermediate (S)-ureidoglycolate, generating urea and glyoxylate. Involved in the utilization of allantoin as nitrogen source. The protein is Ureidoglycolate lyase of Pseudomonas savastanoi pv. phaseolicola (strain 1448A / Race 6) (Pseudomonas syringae pv. phaseolicola (strain 1448A / Race 6)).